A 76-amino-acid polypeptide reads, in one-letter code: Acyl carrier protein (76 aa).

The Carrier domain occupies 1-76 (MSIEERVKKI…SAIDYVQNNQ (76 aa)). Ser-36 carries the O-(pantetheine 4'-phosphoryl)serine modification.

It belongs to the acyl carrier protein (ACP) family. 4'-phosphopantetheine is transferred from CoA to a specific serine of apo-ACP by AcpS. This modification is essential for activity because fatty acids are bound in thioester linkage to the sulfhydryl of the prosthetic group.

The protein localises to the cytoplasm. It participates in lipid metabolism; fatty acid biosynthesis. Functionally, carrier of the growing fatty acid chain in fatty acid biosynthesis. In Pasteurella multocida (strain Pm70), this protein is Acyl carrier protein.